Reading from the N-terminus, the 286-residue chain is uncharacterized protein (286 aa).

This sequence belongs to the NmrA-type oxidoreductase family.

This is an uncharacterized protein from Bacillus subtilis (strain 168).